The sequence spans 317 residues: Putrescine transport system permease protein PotH (317 aa).

Residues 1-31 (MSTLEPAAQSKPPGGFKLWLSQLQMKHGRKL) are Cytoplasmic-facing. The chain crosses the membrane as a helical span at residues 32–51 (VIALPYIWLILLFLLPFLIV). The Periplasmic segment spans residues 52–104 (FKISLAEMARAIPPYTELMEWADGQLSITLNLGNFLQLTDDPLYFDAYLQSLQ). Positions 99 to 305 (YLQSLQVAAI…LLLIVPIMWF (207 aa)) constitute an ABC transmembrane type-1 domain. The helical transmembrane segment at 105 to 124 (VAAISTFCCLLIGYPLAWAV) threads the bilayer. Over 125-133 (AHSKPSTRN) the chain is Cytoplasmic. A helical membrane pass occupies residues 134-153 (ILLLLVILPSWTSFLIRVYA). Residues 154–184 (WMGILKNNGVLNNFLLWLGVIDQPLTILHTN) lie on the Periplasmic side of the membrane. Residues 185-204 (LAVYIGIVYAYVPFMVLPIY) traverse the membrane as a helical segment. Residues 205–239 (TALIRIDYSLVEAALDLGARPLKTFFTVIVPLTKG) lie on the Cytoplasmic side of the membrane. Residues 240 to 259 (GIIAGSMLVFIPAVGEFVIP) form a helical membrane-spanning segment. Residues 260–284 (ELLGGPDSIMIGRVLWQEFFNNRDW) lie on the Periplasmic side of the membrane. Residues 285–304 (PVASAVAIIMLLLLIVPIMW) form a helical membrane-spanning segment. Topologically, residues 305-317 (FHKHQQKSVGEHG) are cytoplasmic.

The protein belongs to the binding-protein-dependent transport system permease family. CysTW subfamily. As to quaternary structure, the complex is composed of two ATP-binding proteins (PotG), two transmembrane proteins (PotH and PotI) and a solute-binding protein (PotF).

Its subcellular location is the cell inner membrane. Transport is feedback inhibited by intracellular polyamines. In terms of biological role, part of the ABC transporter complex PotFGHI involved in putrescine uptake. Responsible for the translocation of the substrate across the membrane. Imports putrescine for maintenance of the optimal concentration of polyamines necessary for cell growth in the presence of glucose. In Escherichia coli (strain K12), this protein is Putrescine transport system permease protein PotH.